The sequence spans 228 residues: MKYLSIFLLATFALAGDAPISTDSKGSPSLIAKFEKTSKSNIEGTIKFTPANNGTVSVSVDLKGLPSDIGPFPYHVHEKPVPASKNCSATENHFNPYNGTVRAATPAAHEVGDLAGKHGNIMGESYKTEYDDSYISLNEKSRSYIGGLSIVIHANNGTRLNCANITLLDEGHGNANTTMSNSSSSSSQSAVNTSSSMASTAPQGNGAERAVVNGLLAAGVVGVIAALI.

Residues 1 to 15 form the signal peptide; that stretch reads MKYLSIFLLATFALA. Residue asparagine 53 is glycosylated (N-linked (GlcNAc...) asparagine). Positions 75 and 77 each coordinate Cu cation. Asparagine 86 carries N-linked (GlcNAc...) asparagine glycosylation. An intrachain disulfide couples cysteine 87 to cysteine 162. Histidine 93 contributes to the Cu cation binding site. Asparagine 98 is a glycosylation site (N-linked (GlcNAc...) asparagine). Residue histidine 153 participates in Cu cation binding. N-linked (GlcNAc...) asparagine glycosylation is found at asparagine 156, asparagine 164, asparagine 176, asparagine 181, and asparagine 192. Low complexity predominate over residues 176 to 201; sequence NTTMSNSSSSSSQSAVNTSSSMASTA. The disordered stretch occupies residues 176–204; that stretch reads NTTMSNSSSSSSQSAVNTSSSMASTAPQG. Asparagine 205 carries the GPI-anchor amidated asparagine lipid modification. Residues 206–228 constitute a propeptide, removed in mature form; sequence GAERAVVNGLLAAGVVGVIAALI.

This sequence belongs to the Cu-Zn superoxide dismutase family. Monomer. It depends on Cu cation as a cofactor. Post-translationally, the GPI-anchor is attached to the protein in the endoplasmic reticulum and serves to target the protein to the cell surface. There, the glucosamine-inositol phospholipid moiety is cleaved off and the GPI-modified mannoprotein is covalently attached via its lipidless GPI glycan remnant to the 1,6-beta-glucan of the outer cell wall layer.

It localises to the secreted. It is found in the cell wall. The protein resides in the membrane. The enzyme catalyses 2 superoxide + 2 H(+) = H2O2 + O2. With respect to regulation, secreted in a disulfide-oxidized form and apo-pools of secreted SOD5 can readily capture extracellular copper for rapid induction of enzyme activity. Superoxide dismutases serve to convert damaging superoxide radicals, a key form of ROS, to less damaging hydrogen peroxide that can be converted into water by catalase action. Degrades host-derived reactive oxygen species to escape innate immune surveillance. Involved in the occurrence of miconazole-tolerant persisters in biofilms. Persisters are cells that survive high doses of an antimicrobial agent. The unusual attributes of SOD5-like fungal proteins, including the absence of zinc and an open active site that readily captures extracellular copper, make these SODs well suited to meet challenges in zinc and copper availability at the host-pathogen interface. The protein is Cell surface Cu-only superoxide dismutase 5 (SOD5) of Candida albicans (strain SC5314 / ATCC MYA-2876) (Yeast).